The following is a 338-amino-acid chain: tRNA N6-adenosine threonylcarbamoyltransferase (338 aa).

Fe cation is bound by residues H110 and H114. Substrate contacts are provided by residues 132-136 (VLSGG), D165, G178, and N274. D298 contributes to the Fe cation binding site.

The protein belongs to the KAE1 / TsaD family. Fe(2+) serves as cofactor.

Its subcellular location is the cytoplasm. It carries out the reaction L-threonylcarbamoyladenylate + adenosine(37) in tRNA = N(6)-L-threonylcarbamoyladenosine(37) in tRNA + AMP + H(+). Functionally, required for the formation of a threonylcarbamoyl group on adenosine at position 37 (t(6)A37) in tRNAs that read codons beginning with adenine. Is involved in the transfer of the threonylcarbamoyl moiety of threonylcarbamoyl-AMP (TC-AMP) to the N6 group of A37, together with TsaE and TsaB. TsaD likely plays a direct catalytic role in this reaction. In Borrelia duttonii (strain Ly), this protein is tRNA N6-adenosine threonylcarbamoyltransferase.